The chain runs to 127 residues: Small ribosomal subunit protein uS11 (127 aa).

It belongs to the universal ribosomal protein uS11 family. Part of the 30S ribosomal subunit. Interacts with proteins S7 and S18. Binds to IF-3.

Its function is as follows. Located on the platform of the 30S subunit, it bridges several disparate RNA helices of the 16S rRNA. Forms part of the Shine-Dalgarno cleft in the 70S ribosome. The polypeptide is Small ribosomal subunit protein uS11 (Rickettsia bellii (strain RML369-C)).